A 237-amino-acid polypeptide reads, in one-letter code: Phosphoribosylaminoimidazole-succinocarboxamide synthase (237 aa).

It belongs to the SAICAR synthetase family.

The catalysed reaction is 5-amino-1-(5-phospho-D-ribosyl)imidazole-4-carboxylate + L-aspartate + ATP = (2S)-2-[5-amino-1-(5-phospho-beta-D-ribosyl)imidazole-4-carboxamido]succinate + ADP + phosphate + 2 H(+). The protein operates within purine metabolism; IMP biosynthesis via de novo pathway; 5-amino-1-(5-phospho-D-ribosyl)imidazole-4-carboxamide from 5-amino-1-(5-phospho-D-ribosyl)imidazole-4-carboxylate: step 1/2. In Listeria monocytogenes serovar 1/2a (strain ATCC BAA-679 / EGD-e), this protein is Phosphoribosylaminoimidazole-succinocarboxamide synthase.